A 396-amino-acid polypeptide reads, in one-letter code: Purple acid phosphatase 5 (396 aa).

An N-terminal signal peptide occupies residues 1–13 (MSLETFPPPAGYN). The N-linked (GlcNAc...) asparagine glycan is linked to N58. Residue D125 coordinates Fe cation. An N-linked (GlcNAc...) asparagine glycan is attached at N133. 2 residues coordinate Fe cation: D153 and Y156. D153 lines the Zn(2+) pocket. A Zn(2+)-binding site is contributed by N190. Residue N190 coordinates substrate. N238 carries an N-linked (GlcNAc...) asparagine glycan. H250 is a binding site for Zn(2+). Residue H260 is the Proton donor of the active site. Position 287 (H287) interacts with Zn(2+). 287–289 (HVH) contributes to the substrate binding site. H289 is a binding site for Fe cation. 2 N-linked (GlcNAc...) asparagine glycosylation sites follow: N303 and N360.

This sequence belongs to the metallophosphoesterase superfamily. Purple acid phosphatase family. As to quaternary structure, homodimer. Requires Fe cation as cofactor. Zn(2+) serves as cofactor.

The protein localises to the secreted. The enzyme catalyses a phosphate monoester + H2O = an alcohol + phosphate. The chain is Purple acid phosphatase 5 (PAP5) from Arabidopsis thaliana (Mouse-ear cress).